A 351-amino-acid polypeptide reads, in one-letter code: Photosystem II D2 protein (351 aa).

A helical membrane pass occupies residues Cys-39–Thr-59. Position 116 (His-116) interacts with chlorophyll a. Residues Gly-123–Pro-139 form a helical membrane-spanning segment. The pheophytin a site is built by Gln-128 and Asn-141. Residues Val-151–Ser-164 form a helical membrane-spanning segment. His-196 contacts chlorophyll a. A helical transmembrane segment spans residues Gly-206 to Glu-226. His-213 and Phe-260 together coordinate a plastoquinone. His-213 is a Fe cation binding site. His-267 contributes to the Fe cation binding site. A helical membrane pass occupies residues Gly-277 to Arg-293.

The protein belongs to the reaction center PufL/M/PsbA/D family. As to quaternary structure, PSII is composed of 1 copy each of membrane proteins PsbA, PsbB, PsbC, PsbD, PsbE, PsbF, PsbH, PsbI, PsbJ, PsbK, PsbL, PsbM, PsbT, PsbX, PsbY, PsbZ, Psb30/Ycf12, peripheral proteins PsbO, CyanoQ (PsbQ), PsbU, PsbV and a large number of cofactors. It forms dimeric complexes. The D1/D2 heterodimer binds P680, chlorophylls that are the primary electron donor of PSII, and subsequent electron acceptors. It shares a non-heme iron and each subunit binds pheophytin, quinone, additional chlorophylls, carotenoids and lipids. There is also a Cl(-1) ion associated with D1 and D2, which is required for oxygen evolution. The PSII complex binds additional chlorophylls, carotenoids and specific lipids. is required as a cofactor.

The protein localises to the cellular thylakoid membrane. The enzyme catalyses 2 a plastoquinone + 4 hnu + 2 H2O = 2 a plastoquinol + O2. Its function is as follows. Photosystem II (PSII) is a light-driven water:plastoquinone oxidoreductase that uses light energy to abstract electrons from H(2)O, generating O(2) and a proton gradient subsequently used for ATP formation. It consists of a core antenna complex that captures photons, and an electron transfer chain that converts photonic excitation into a charge separation. The D1/D2 (PsbA/PsbD) reaction center heterodimer binds P680, the primary electron donor of PSII as well as several subsequent electron acceptors. D2 is needed for assembly of a stable PSII complex. The chain is Photosystem II D2 protein from Crocosphaera subtropica (strain ATCC 51142 / BH68) (Cyanothece sp. (strain ATCC 51142)).